We begin with the raw amino-acid sequence, 1353 residues long: MTQEHNAAVLDLNPTFSTLIFFVNGKKVIDTNPDPECTLLTYLREKLRLCGTKLGCGEGGCGACTVMISRIDTLTNRIKHIAVNACLTPVCAMHGSAVTTVEGIGSTRTRLHPVQERLAKAHGSQCGFCTPGIVMSMYALLRNLSQPSMKDLEIAFQGNLCRCTGYRPILEGYKTFTKEFGCAMGDKCCKVNGNKCGEGMENGGDMVDDKLFEKSEFVPFDPSQEPIFPPELQLNKDWDSQTLVYKGERATWYRPGNLEDLLKIKAQFPEAKLVVGNTEIGVEVKFKHFLYPVLVNPTKVKEMIDVQELEDSIYFGASVSLMDIDRILRSSIEKLPEHQTRFFQCAVNMLHYFAGKQIRNVASLGGNIMTGSPISDMNPVLMAGAVKFKVAKYVEGQIKYREVCMASGFFTGYRKNVIEPTEILVGLYFPKTLEHQYVVAFKQAKRRDDDIAIVNAAINVFIDPRSITVDKVYMAFGGMAPTTVLATRTADIMVKQQWNKVLMERVVENLCAELPLAPSAPGGMIAYRRSLVVSLFFKAYLTITQQLIKSGILPQDSLPQEELSGSDVFHTPALKSAQLFEKVSNKQSECDPIGRPKIHASALKQATGEAIYCDDMPRMENELYLALVLSTKAHAKILSIDASEALAMPGVHAFFSSKDITQHENEVGPVFHDEEVFASDMVYCQGQVIGAIAADNPNFSSKTARKVTIEYEDIKPVIITIEQAIEHKSYFPDYPRFTEIGDVEKAFSEADHVYEGSCRMGGQEHFYLETHASLAVPRDSDEIEIFCSTQHPSEVQKLVAHVLSTSAHRVVCRAKRLGGGFGGKESRAIAVALPVALACHRLRRPIRCMLDRDEDMMITGTRHPFLFKYKIAFTSEGRLTGCYIECYNNAGWSMDLSFSVLERAMFHFENCYKIPNIKVGGWVCKTNLPSNTAFRGFGGPQGMFAGEHIIRDVARILGKDYLEIMKQNFYKEGDITHYQQKLDNFPIEKCFYDCLQQSNYYQKRKEIEEFNRNHRWRKRGISLVPTKYGIAFGVSHLNQAGALINIYADGSVLLSHGGVEIGQGLHTKMIQCCARALQIPIEFIHISETATDKVPNTSPTAASSGSDLNGMAVLDACEKLNKRLAPIKEANPNGSWTEWINKAYFERVSLSATGFYRMPDIGYDPVQNPNALMYNYFTNGVGSSIVEIDCLTGDHQVLSTDIVMDIGSSLNPAIDIGQIEGAFMQGYGLFTLEEMIYSPQGVLYSRGPGMYKLPGFADIPGEFNVTILTGAANPRAVYSSKAVGEPPLFIGCSVFFAIKEAITSARLMNGLSEDFKLESPATSARIRMACQDEFTNLIEQPPAGSYVPWNIVP.

The 2Fe-2S ferredoxin-type domain occupies 17–104 (STLIFFVNGK…GSAVTTVEGI (88 aa)). [2Fe-2S] cluster is bound by residues cysteine 56, cysteine 61, cysteine 64, cysteine 86, cysteine 126, cysteine 129, cysteine 161, and cysteine 163. The FAD-binding PCMH-type domain maps to 245 to 434 (YKGERATWYR…VGLYFPKTLE (190 aa)). Residues 273–280 (LVVGNTEI), phenylalanine 353, 363–367 (SLGGN), aspartate 376, leucine 424, and lysine 442 contribute to the FAD site. Mo-molybdopterin is bound by residues glutamine 790 and phenylalanine 821. The substrate site is built by glutamate 825 and arginine 903. Residue arginine 935 participates in Mo-molybdopterin binding. Phenylalanine 937 is a substrate binding site. Mo-molybdopterin is bound at residue alanine 1102. Residue glutamate 1285 is the Proton acceptor of the active site.

Belongs to the xanthine dehydrogenase family. As to quaternary structure, homodimer. FAD is required as a cofactor. Requires Mo-molybdopterin as cofactor. [2Fe-2S] cluster serves as cofactor.

The protein localises to the peroxisome. It catalyses the reaction xanthine + NAD(+) + H2O = urate + NADH + H(+). The catalysed reaction is hypoxanthine + NAD(+) + H2O = xanthine + NADH + H(+). Its function is as follows. Key enzyme in purine degradation. Catalyzes the oxidation of hypoxanthine to xanthine. Catalyzes the oxidation of xanthine to uric acid. This is Xanthine dehydrogenase (XDH) from Calliphora vicina (Blue blowfly).